The chain runs to 158 residues: SsrA-binding protein (158 aa).

It belongs to the SmpB family.

The protein localises to the cytoplasm. Its function is as follows. Required for rescue of stalled ribosomes mediated by trans-translation. Binds to transfer-messenger RNA (tmRNA), required for stable association of tmRNA with ribosomes. tmRNA and SmpB together mimic tRNA shape, replacing the anticodon stem-loop with SmpB. tmRNA is encoded by the ssrA gene; the 2 termini fold to resemble tRNA(Ala) and it encodes a 'tag peptide', a short internal open reading frame. During trans-translation Ala-aminoacylated tmRNA acts like a tRNA, entering the A-site of stalled ribosomes, displacing the stalled mRNA. The ribosome then switches to translate the ORF on the tmRNA; the nascent peptide is terminated with the 'tag peptide' encoded by the tmRNA and targeted for degradation. The ribosome is freed to recommence translation, which seems to be the essential function of trans-translation. The polypeptide is SsrA-binding protein (Roseiflexus castenholzii (strain DSM 13941 / HLO8)).